Reading from the N-terminus, the 1189-residue chain is Magnesium-chelatase subunit H (1189 aa).

This sequence belongs to the Mg-chelatase subunit H family.

It carries out the reaction protoporphyrin IX + Mg(2+) + ATP + H2O = Mg-protoporphyrin IX + ADP + phosphate + 3 H(+). It participates in porphyrin-containing compound metabolism; bacteriochlorophyll biosynthesis (light-independent). Its function is as follows. Involved in bacteriochlorophyll pigment biosynthesis; introduces a magnesium ion into protoporphyrin IX to yield Mg-protoroporphyrin IX. The sequence is that of Magnesium-chelatase subunit H (bchH) from Rhodobacter capsulatus (strain ATCC BAA-309 / NBRC 16581 / SB1003).